The following is a 189-amino-acid chain: Thioredoxin-like protein CITRX, chloroplastic (189 aa).

Residues 1–56 constitute a chloroplast transit peptide; sequence MAMAAAASLLPASAAPTLPGRAFRPPRNSTPTASLSCDGGSRCRGVGLGVILGGCR. The Thioredoxin domain occupies 72–189; it reads GSGKYIAPDY…MIRNIIDNEL (118 aa). Residues Cys-112 and Cys-115 each act as nucleophile in the active site. Cys-112 and Cys-115 are oxidised to a cystine.

It belongs to the thioredoxin family. Plant CITRX-type subfamily.

It localises to the plastid. The protein resides in the chloroplast. Its function is as follows. Probable thiol-disulfide oxidoreductase that may play a role in proper chloroplast development. In Oryza sativa subsp. japonica (Rice), this protein is Thioredoxin-like protein CITRX, chloroplastic.